Here is a 99-residue protein sequence, read N- to C-terminus: Aspartyl/glutamyl-tRNA(Asn/Gln) amidotransferase subunit C (99 aa).

Belongs to the GatC family. As to quaternary structure, heterotrimer of A, B and C subunits.

The enzyme catalyses L-glutamyl-tRNA(Gln) + L-glutamine + ATP + H2O = L-glutaminyl-tRNA(Gln) + L-glutamate + ADP + phosphate + H(+). It carries out the reaction L-aspartyl-tRNA(Asn) + L-glutamine + ATP + H2O = L-asparaginyl-tRNA(Asn) + L-glutamate + ADP + phosphate + 2 H(+). Allows the formation of correctly charged Asn-tRNA(Asn) or Gln-tRNA(Gln) through the transamidation of misacylated Asp-tRNA(Asn) or Glu-tRNA(Gln) in organisms which lack either or both of asparaginyl-tRNA or glutaminyl-tRNA synthetases. The reaction takes place in the presence of glutamine and ATP through an activated phospho-Asp-tRNA(Asn) or phospho-Glu-tRNA(Gln). The chain is Aspartyl/glutamyl-tRNA(Asn/Gln) amidotransferase subunit C from Kineococcus radiotolerans (strain ATCC BAA-149 / DSM 14245 / SRS30216).